We begin with the raw amino-acid sequence, 324 residues long: Putative ribose-phosphate pyrophosphokinase 2 (324 aa).

ATP-binding positions include 43-45 (DGE) and 102-103 (RQ). His136 lines the Mg(2+) pocket. D-ribose 5-phosphate is bound by residues Asp225 and 229–233 (NTGKT).

It belongs to the ribose-phosphate pyrophosphokinase family. Class I subfamily. Homohexamer. Mg(2+) is required as a cofactor.

It is found in the cytoplasm. The enzyme catalyses D-ribose 5-phosphate + ATP = 5-phospho-alpha-D-ribose 1-diphosphate + AMP + H(+). It functions in the pathway metabolic intermediate biosynthesis; 5-phospho-alpha-D-ribose 1-diphosphate biosynthesis; 5-phospho-alpha-D-ribose 1-diphosphate from D-ribose 5-phosphate (route I): step 1/1. Functionally, involved in the biosynthesis of the central metabolite phospho-alpha-D-ribosyl-1-pyrophosphate (PRPP) via the transfer of pyrophosphoryl group from ATP to 1-hydroxyl of ribose-5-phosphate (Rib-5-P). The sequence is that of Putative ribose-phosphate pyrophosphokinase 2 from Streptococcus agalactiae serotype III (strain NEM316).